Here is a 464-residue protein sequence, read N- to C-terminus: Calcitonin gene-related peptide type 1 receptor (464 aa).

The first 23 residues, 1-23, serve as a signal peptide directing secretion; that stretch reads MMDKKCTLCFLFLLLLNMALIAA. Over 24–139 the chain is Extracellular; the sequence is ESEEGANQTD…STHEKVKTAL (116 aa). N-linked (GlcNAc...) asparagine glycans are attached at residues Asn30, Asn66, Asn118, Asn123, Asn128, and Asn129. 3 disulfides stabilise this stretch: Cys48–Cys74, Cys65–Cys105, and Cys88–Cys127. The helical transmembrane segment at 140–164 threads the bilayer; the sequence is NLFYLTIIGHGLSIASLIISLIIFF. The Cytoplasmic portion of the chain corresponds to 165–175; the sequence is YFKSLSCQRIT. The helical transmembrane segment at 176-198 threads the bilayer; that stretch reads LHKNLFFSFVCNSIVTIIHLTAV. At 199–209 the chain is on the extracellular side; the sequence is ANNQALVATNP. The chain crosses the membrane as a helical span at residues 210–238; it reads VSCKVSQFIHLYLMGCNYFWMLCEGIYLH. Residues 239 to 252 are Cytoplasmic-facing; the sequence is TLIVVAVFAEKQHL. The chain crosses the membrane as a helical span at residues 253 to 273; sequence MWYYFLGWGFPLLPACIHAIA. Topologically, residues 274-289 are extracellular; that stretch reads RSLYYNDNCWISSDTH. The segment at 288–289 is required for RAMP3 interaction; it reads TH. The helical transmembrane segment at 290 to 314 threads the bilayer; that stretch reads LLYIIHGPICAALLVNLFFLLNIVR. Over 315-329 the chain is Cytoplasmic; sequence VLITKLKVTHQAESN. A helical transmembrane segment spans residues 330–351; it reads LYMKAVRATLILVPLLGIEFVL. Residues 352-366 lie on the Extracellular side of the membrane; the sequence is FPWRPEGKVAEEVYD. A helical transmembrane segment spans residues 367-387; the sequence is YVMHILMHYQGLLVSTIFCFF. Over 388-464 the chain is Cytoplasmic; that stretch reads NGEVQAILRR…KPEKMYDLVM (77 aa). A phosphoserine mark is found at Ser420 and Ser445.

It belongs to the G-protein coupled receptor 2 family. In terms of assembly, heterodimer of CALCRL and RAMP1; the receptor complex functions as CGRP receptor. Heterodimer of CALCRL and RAMP2 or CALCRL and RAMP3; the complexes function as adrenomedullin receptor.

Its subcellular location is the cell membrane. G protein-coupled receptor which specificity is determined by its interaction with receptor-activity-modifying proteins (RAMPs). Together with RAMP1, form the receptor complex for calcitonin-gene-related peptides CALCA/CGRP1 and CALCB/CGRP2. Together with RAMP2 or RAMP3, function as receptor complexes for adrenomedullin (ADM and ADM2). Ligand binding causes a conformation change that triggers signaling via guanine nucleotide-binding proteins (G proteins) and modulates the activity of downstream effectors. Activates cAMP-dependent pathway. The polypeptide is Calcitonin gene-related peptide type 1 receptor (Rattus norvegicus (Rat)).